Here is a 236-residue protein sequence, read N- to C-terminus: Small ribosomal subunit protein uS2c (236 aa).

Component of the chloroplast small ribosomal subunit (SSU). Mature 70S chloroplast ribosomes of higher plants consist of a small (30S) and a large (50S) subunit. The 30S small subunit contains 1 molecule of ribosomal RNA (16S rRNA) and 24 different proteins. The 50S large subunit contains 3 rRNA molecules (23S, 5S and 4.5S rRNA) and 33 different proteins.

Its subcellular location is the plastid. The protein localises to the chloroplast. In terms of biological role, component of the chloroplast ribosome (chloro-ribosome), a dedicated translation machinery responsible for the synthesis of chloroplast genome-encoded proteins, including proteins of the transcription and translation machinery and components of the photosynthetic apparatus. The polypeptide is Small ribosomal subunit protein uS2c (rps2) (Spinacia oleracea (Spinach)).